Reading from the N-terminus, the 297-residue chain is Tumor necrosis factor receptor superfamily member 27 (297 aa).

Residues 1 to 138 (MDCQENEYRD…AHTVPPREAT (138 aa)) are Extracellular-facing. TNFR-Cys repeat units follow at residues 2 to 41 (DCQENEYRDQWGRCVTCQQCGPGQELSKDCGYGEGGDAHC), 43 to 83 (VCPP…NAIC), and 85 to 118 (DCLPRFYRKTRIGGLQDQECIPCTKQTPSSEVQC). Intrachain disulfides connect Cys3–Cys15, Cys18–Cys31, Cys21–Cys41, Cys44–Cys58, Cys61–Cys75, Cys64–Cys83, Cys86–Cys104, and Cys107–Cys118. N-linked (GlcNAc...) asparagine glycans are attached at residues Asn74 and Asn77. The helical; Signal-anchor for type III membrane protein transmembrane segment at 139–159 (LVALVGSLLVVFALAFLGLFF) threads the bilayer. Residues 160–297 (LYCKQIFNRH…LYVPFEVPSL (138 aa)) lie on the Cytoplasmic side of the membrane.

Associates with TRAF1, TRAF3 and TRAF6.

The protein resides in the membrane. Its function is as follows. Receptor for EDA isoform A2, but not for EDA isoform A1. Mediates the activation of the NF-kappa-B and JNK pathways. Activation seems to be mediated by binding to TRAF3 and TRAF6. The sequence is that of Tumor necrosis factor receptor superfamily member 27 (Eda2r) from Mus musculus (Mouse).